Reading from the N-terminus, the 21-residue chain is Large ribosomal subunit protein uL10 (21 aa).

It belongs to the universal ribosomal protein uL10 family. In terms of assembly, part of the ribosomal stalk of the 50S ribosomal subunit. The N-terminus interacts with L11 and the large rRNA to form the base of the stalk. The C-terminus forms an elongated spine to which L12 dimers bind in a sequential fashion forming a multimeric L10(L12)X complex.

Forms part of the ribosomal stalk, playing a central role in the interaction of the ribosome with GTP-bound translation factors. In Proteus vulgaris, this protein is Large ribosomal subunit protein uL10 (rplJ).